Here is a 99-residue protein sequence, read N- to C-terminus: Large ribosomal subunit protein bL27 (99 aa).

Positions 1-9 (MLIMNLQLF) are excised as a propeptide.

The protein belongs to the bacterial ribosomal protein bL27 family. The N-terminus is cleaved by ribosomal processing cysteine protease Prp.

The protein is Large ribosomal subunit protein bL27 of Clostridium botulinum (strain Eklund 17B / Type B).